The following is a 375-amino-acid chain: Queuine tRNA-ribosyltransferase (375 aa).

The active-site Proton acceptor is the aspartate 89. Substrate-binding positions include 89-93, aspartate 143, glutamine 187, and glycine 214; that span reads DSGGF. The segment at 245-251 is RNA binding; the sequence is GVGKPED. Aspartate 264 functions as the Nucleophile in the catalytic mechanism. The RNA binding; important for wobble base 34 recognition stretch occupies residues 269 to 273; that stretch reads TRNAR. Cysteine 302, cysteine 304, cysteine 307, and histidine 333 together coordinate Zn(2+).

The protein belongs to the queuine tRNA-ribosyltransferase family. In terms of assembly, homodimer. Within each dimer, one monomer is responsible for RNA recognition and catalysis, while the other monomer binds to the replacement base PreQ1. Requires Zn(2+) as cofactor.

It carries out the reaction 7-aminomethyl-7-carbaguanine + guanosine(34) in tRNA = 7-aminomethyl-7-carbaguanosine(34) in tRNA + guanine. It functions in the pathway tRNA modification; tRNA-queuosine biosynthesis. Its function is as follows. Catalyzes the base-exchange of a guanine (G) residue with the queuine precursor 7-aminomethyl-7-deazaguanine (PreQ1) at position 34 (anticodon wobble position) in tRNAs with GU(N) anticodons (tRNA-Asp, -Asn, -His and -Tyr). Catalysis occurs through a double-displacement mechanism. The nucleophile active site attacks the C1' of nucleotide 34 to detach the guanine base from the RNA, forming a covalent enzyme-RNA intermediate. The proton acceptor active site deprotonates the incoming PreQ1, allowing a nucleophilic attack on the C1' of the ribose to form the product. After dissociation, two additional enzymatic reactions on the tRNA convert PreQ1 to queuine (Q), resulting in the hypermodified nucleoside queuosine (7-(((4,5-cis-dihydroxy-2-cyclopenten-1-yl)amino)methyl)-7-deazaguanosine). The protein is Queuine tRNA-ribosyltransferase of Salmonella enteritidis PT4 (strain P125109).